Consider the following 1775-residue polypeptide: Internalin I (1775 aa).

Residues 1-28 form the signal peptide; sequence MKKKFSIVIISVLLLGYLAPFDTLLVGA. A compositionally biased stretch (low complexity) spans 36-50; it reads DTTVKTAETETATEA. Positions 36–97 are disordered; it reads DTTVKTAETE…SNIKTEINTD (62 aa). The span at 58 to 85 shows a compositional bias: basic and acidic residues; the sequence is DNEKAEEPKEAEASKETTEKEEKAKTKE. LRR repeat units lie at residues 152–176, 180–201, 202–224, 225–247, 248–269, 274–295, 296–318, 319–341, 342–364, 365–386, 387–409, 410–431, 432–453, 454–475, 476–497, 498–519, 520–541, 542–563, 564–585, 586–607, 608–629, 630–650, 654–675, 682–704, 705–726, 727–748, and 749–770; these read AISQ…EGLQ, NLTS…KDLV, NLVS…EGLV, NLQE…AALP, VLKE…NPAG, ELET…AKLP, KLKN…KGAT, KLQL…SGLS, ELEM…KDLP, NLVN…NNLP, KLQT…TDMP, QLKT…DNLP, KLEK…NDLP, RLSY…KKLP, LLEW…TNFP, SLNY…TELP, SLKE…HDMP, NLRK…DNLP, KLQN…HDLP, SLET…DNLP, ELTY…GDLP, KLEI…GTMD, KLRN…GNLS, NLTE…STLS, RLIY…SNLT, TLQE…SDLD, and NLNK…ANMV. Residues 782–869 form the LRRCT domain; the sequence is TYTLPTVLSY…SAVKVTANAE (88 aa). 3 consecutive MucBP domains span residues 1507 to 1566, 1572 to 1631, and 1641 to 1702; these read DAAA…EQTV, AIEP…PQTI, and SKKS…SQTV. The disordered stretch occupies residues 1713–1737; the sequence is SKDEPKVKGKTNQPPSADTKLKVDN. Residues 1740–1744 carry the LPXTG sorting signal motif; the sequence is LPATG. Residue T1743 is modified to Pentaglycyl murein peptidoglycan amidated threonine. Positions 1744-1775 are cleaved as a propeptide — removed by sortase; that stretch reads GDTENMALAVLIGFNMLLVASIFLFRKPKTNQ.

It belongs to the internalin family.

The protein localises to the secreted. Its subcellular location is the cell wall. Functionally, a role in virulence could not be demonstrated. The chain is Internalin I (inlI) from Listeria monocytogenes serotype 4b (strain F2365).